Here is a 269-residue protein sequence, read N- to C-terminus: Protein shisa-1 (269 aa).

The N-terminal stretch at 1–18 is a signal peptide; sequence MEFIVLLTVCALLGLSCG. Residues 19-98 lie on the Extracellular side of the membrane; the sequence is QHGEYCHGWT…LPPTVPTYFP (80 aa). Residues 99-119 form a helical membrane-spanning segment; the sequence is FLLVGSIFVSFVILGSLVGLC. Residues 120–269 lie on the Cytoplasmic side of the membrane; sequence CCKCLKPEDD…TVCSGSPSKC (150 aa). A disordered region spans residues 129-167; sequence DTQVSGPAPIQSRLLDQDPSTDTSRHSSSSSASMPRPPI. The segment covering 146–162 has biased composition (low complexity); it reads DPSTDTSRHSSSSSASM.

It belongs to the shisa family. Interacts with immature forms of fzd8 and fgfr.

The protein resides in the endoplasmic reticulum. It is found in the membrane. Functionally, required for head formation during gastrulation. Functions as an inhibitor for the caudalizing signals wnt and fgf, does not inhibit bmp, activin and nodal signaling in head formation process. Induces retention of fzd8 in the endoplasmic reticulum and inhibits trafficking of fzd8 to the cell surface. This Xenopus laevis (African clawed frog) protein is Protein shisa-1 (shisa1).